A 316-amino-acid chain; its full sequence is L-lactate dehydrogenase (316 aa).

Residues V15, D37, K42, Y68, and 82–83 contribute to the NAD(+) site; that span reads GL. Substrate is bound by residues Q85, R91, and 123 to 126; that span reads NPVD. NAD(+) contacts are provided by residues 121-123 and T146; that span reads ASN. Position 151-154 (151-154) interacts with substrate; that stretch reads DTSR. Positions 156 and 171 each coordinate beta-D-fructose 1,6-bisphosphate. H178 functions as the Proton acceptor in the catalytic mechanism. Y222 carries the phosphotyrosine modification. T231 provides a ligand contact to substrate.

The protein belongs to the LDH/MDH superfamily. LDH family. In terms of assembly, homotetramer.

The protein resides in the cytoplasm. It carries out the reaction (S)-lactate + NAD(+) = pyruvate + NADH + H(+). The protein operates within fermentation; pyruvate fermentation to lactate; (S)-lactate from pyruvate: step 1/1. With respect to regulation, allosterically activated by fructose 1,6-bisphosphate (FBP). Catalyzes the conversion of lactate to pyruvate. This is L-lactate dehydrogenase from Borrelia turicatae (strain 91E135).